Here is a 343-residue protein sequence, read N- to C-terminus: UDP-3-O-acylglucosamine N-acyltransferase (343 aa).

H245 serves as the catalytic Proton acceptor.

The protein belongs to the transferase hexapeptide repeat family. LpxD subfamily. Homotrimer.

The enzyme catalyses a UDP-3-O-[(3R)-3-hydroxyacyl]-alpha-D-glucosamine + a (3R)-hydroxyacyl-[ACP] = a UDP-2-N,3-O-bis[(3R)-3-hydroxyacyl]-alpha-D-glucosamine + holo-[ACP] + H(+). It participates in bacterial outer membrane biogenesis; LPS lipid A biosynthesis. Its function is as follows. Catalyzes the N-acylation of UDP-3-O-acylglucosamine using 3-hydroxyacyl-ACP as the acyl donor. Is involved in the biosynthesis of lipid A, a phosphorylated glycolipid that anchors the lipopolysaccharide to the outer membrane of the cell. In Phenylobacterium zucineum (strain HLK1), this protein is UDP-3-O-acylglucosamine N-acyltransferase.